A 391-amino-acid polypeptide reads, in one-letter code: tRNA-specific 2-thiouridylase MnmA (391 aa).

ATP is bound by residues 20 to 27 and L46; that span reads AMSGGVDS. Residue C114 is the Nucleophile of the active site. Residues C114 and C210 are joined by a disulfide bond. ATP is bound at residue G138. Positions 160-162 are interaction with tRNA; that stretch reads RDQ. C210 (cysteine persulfide intermediate) is an active-site residue.

This sequence belongs to the MnmA/TRMU family.

Its subcellular location is the cytoplasm. The enzyme catalyses S-sulfanyl-L-cysteinyl-[protein] + uridine(34) in tRNA + AH2 + ATP = 2-thiouridine(34) in tRNA + L-cysteinyl-[protein] + A + AMP + diphosphate + H(+). Functionally, catalyzes the 2-thiolation of uridine at the wobble position (U34) of tRNA, leading to the formation of s(2)U34. The polypeptide is tRNA-specific 2-thiouridylase MnmA (Bartonella bacilliformis (strain ATCC 35685 / KC583 / Herrer 020/F12,63)).